The sequence spans 248 residues: mRNA-decapping protein OPG122 (248 aa).

Residues 45 to 227 (HKRVSVSAIL…IAKYALDTAK (183 aa)) enclose the Nudix hydrolase domain. The Nudix box motif lies at 126–147 (GIPKRGENVPECLSREIKEEVN). Glu-132 contacts Mg(2+). Glu-141 (nucleophile) is an active-site residue. A Mn(2+)-binding site is contributed by Glu-145. Asp-167 provides a ligand contact to Mg(2+).

Belongs to the Nudix hydrolase family. Mg(2+) is required as a cofactor. Mn(2+) serves as cofactor.

The protein localises to the host mitochondrion. In terms of biological role, decapping enzyme that remove the protective 5'-cap from both host and viral mRNAs to commit transcripts for decay by the cellular exonuclease XRN1. Preferentially targets spliced mRNAs and since all viral genes are intronless, it preferentially targets host over viral transcripts. Acceleration of the turnover of cellular transcripts promotes the shutoff of host protein synthesis and therefore diminish the magnitude of antiviral response. This is mRNA-decapping protein OPG122 (OPG122) from Vaccinia virus (strain Copenhagen) (VACV).